Consider the following 94-residue polypeptide: Protein RnfH (94 aa).

Belongs to the UPF0125 (RnfH) family.

This chain is Protein RnfH, found in Yersinia pestis bv. Antiqua (strain Antiqua).